A 488-amino-acid polypeptide reads, in one-letter code: 3-octaprenyl-4-hydroxybenzoate carboxy-lyase (488 aa).

Asn-172 serves as a coordination point for Mn(2+). Residues 175–177 (IYR), 189–191 (RWL), and 194–195 (RG) contribute to the prenylated FMN site. Residue Glu-238 coordinates Mn(2+). The Proton donor role is filled by Asp-287.

It belongs to the UbiD family. As to quaternary structure, homohexamer. Requires prenylated FMN as cofactor. Mn(2+) serves as cofactor.

Its subcellular location is the cell membrane. The catalysed reaction is a 4-hydroxy-3-(all-trans-polyprenyl)benzoate + H(+) = a 2-(all-trans-polyprenyl)phenol + CO2. Its pathway is cofactor biosynthesis; ubiquinone biosynthesis. In terms of biological role, catalyzes the decarboxylation of 3-octaprenyl-4-hydroxy benzoate to 2-octaprenylphenol, an intermediate step in ubiquinone biosynthesis. The protein is 3-octaprenyl-4-hydroxybenzoate carboxy-lyase of Hahella chejuensis (strain KCTC 2396).